The following is a 556-amino-acid chain: 2-isopropylmalate synthase (556 aa).

The Pyruvate carboxyltransferase domain occupies 33–307 (PIWCSSDLRD…NPGLDFSDID (275 aa)). Residues Asp-42, His-246, His-248, and Asn-282 each contribute to the Mg(2+) site. Residues 439–556 (ANVPYALISH…SLSQTQAKAA (118 aa)) form a regulatory domain region.

This sequence belongs to the alpha-IPM synthase/homocitrate synthase family. LeuA type 2 subfamily. Homodimer. The cofactor is Mg(2+).

Its subcellular location is the cytoplasm. It catalyses the reaction 3-methyl-2-oxobutanoate + acetyl-CoA + H2O = (2S)-2-isopropylmalate + CoA + H(+). Its pathway is amino-acid biosynthesis; L-leucine biosynthesis; L-leucine from 3-methyl-2-oxobutanoate: step 1/4. In terms of biological role, catalyzes the condensation of the acetyl group of acetyl-CoA with 3-methyl-2-oxobutanoate (2-ketoisovalerate) to form 3-carboxy-3-hydroxy-4-methylpentanoate (2-isopropylmalate). The chain is 2-isopropylmalate synthase from Pseudomonas syringae pv. syringae (strain B728a).